A 58-amino-acid chain; its full sequence is Temporin-1Th (58 aa).

A signal peptide spans 1-22; sequence MFTLKKSLLLLFFLGTINLSLC. A propeptide spanning residues 23 to 46 is cleaved from the precursor; the sequence is EEERNAEEERRDEPDERDVQVEKR. The interval 25 to 46 is disordered; that stretch reads ERNAEEERRDEPDERDVQVEKR. Leu-56 carries the post-translational modification Leucine amide.

Expressed by the skin glands.

The protein resides in the secreted. Its function is as follows. Antimicrobial peptide that renders both the outer and inner membrane of bacteria permeable to hydrophobic substances of low molecular mass. The sequence is that of Temporin-1Th from Rana temporaria (European common frog).